The sequence spans 405 residues: Acetate kinase (405 aa).

Asn7 contributes to the Mg(2+) binding site. Lys14 lines the ATP pocket. Arg98 contributes to the substrate binding site. Residue Asp155 is the Proton donor/acceptor of the active site. ATP contacts are provided by residues 215–219 (HLGNG), 289–291 (DMR), and 337–341 (GIGEN). Glu391 is a Mg(2+) binding site.

The protein belongs to the acetokinase family. As to quaternary structure, homodimer. Mg(2+) is required as a cofactor. The cofactor is Mn(2+).

Its subcellular location is the cytoplasm. It catalyses the reaction acetate + ATP = acetyl phosphate + ADP. The protein operates within metabolic intermediate biosynthesis; acetyl-CoA biosynthesis; acetyl-CoA from acetate: step 1/2. In terms of biological role, catalyzes the formation of acetyl phosphate from acetate and ATP. Can also catalyze the reverse reaction. The protein is Acetate kinase of Desulfotalea psychrophila (strain LSv54 / DSM 12343).